The primary structure comprises 82 residues: NADH-ubiquinone oxidoreductase 9.5 kDa subunit (82 aa).

The chain crosses the membrane as a helical span at residues 25–43 (AYFYSCVIAGLGPVFLTVV).

It belongs to the complex I NDUFA3 subunit family. In terms of assembly, complex I is composed of about 40 different subunits.

The protein localises to the mitochondrion inner membrane. In terms of biological role, accessory subunit of the mitochondrial membrane respiratory chain NADH dehydrogenase (Complex I), that is believed not to be involved in catalysis. Complex I functions in the transfer of electrons from NADH to the respiratory chain. The immediate electron acceptor for the enzyme is believed to be ubiquinone. This subunit binds ubiquinone. This Neurospora crassa (strain ATCC 24698 / 74-OR23-1A / CBS 708.71 / DSM 1257 / FGSC 987) protein is NADH-ubiquinone oxidoreductase 9.5 kDa subunit (nuo9.5).